Reading from the N-terminus, the 407-residue chain is Imidazolonepropionase (407 aa).

The Fe(3+) site is built by His72 and His74. Positions 72 and 74 each coordinate Zn(2+). The 4-imidazolone-5-propanoate site is built by Arg81, Tyr144, and His177. Residue Tyr144 coordinates N-formimidoyl-L-glutamate. Residue His242 coordinates Fe(3+). His242 is a binding site for Zn(2+). Residue Gln245 participates in 4-imidazolone-5-propanoate binding. Residue Asp317 participates in Fe(3+) binding. Asp317 serves as a coordination point for Zn(2+). Positions 319 and 321 each coordinate N-formimidoyl-L-glutamate. Thr322 lines the 4-imidazolone-5-propanoate pocket.

This sequence belongs to the metallo-dependent hydrolases superfamily. HutI family. Zn(2+) serves as cofactor. Fe(3+) is required as a cofactor.

It localises to the cytoplasm. The catalysed reaction is 4-imidazolone-5-propanoate + H2O = N-formimidoyl-L-glutamate. It participates in amino-acid degradation; L-histidine degradation into L-glutamate; N-formimidoyl-L-glutamate from L-histidine: step 3/3. Its function is as follows. Catalyzes the hydrolytic cleavage of the carbon-nitrogen bond in imidazolone-5-propanoate to yield N-formimidoyl-L-glutamate. It is the third step in the universal histidine degradation pathway. This is Imidazolonepropionase from Rhizobium rhizogenes (Agrobacterium rhizogenes).